We begin with the raw amino-acid sequence, 484 residues long: Aspartyl/glutamyl-tRNA(Asn/Gln) amidotransferase subunit B (484 aa).

This sequence belongs to the GatB/GatE family. GatB subfamily. In terms of assembly, heterotrimer of A, B and C subunits.

The catalysed reaction is L-glutamyl-tRNA(Gln) + L-glutamine + ATP + H2O = L-glutaminyl-tRNA(Gln) + L-glutamate + ADP + phosphate + H(+). It catalyses the reaction L-aspartyl-tRNA(Asn) + L-glutamine + ATP + H2O = L-asparaginyl-tRNA(Asn) + L-glutamate + ADP + phosphate + 2 H(+). In terms of biological role, allows the formation of correctly charged Asn-tRNA(Asn) or Gln-tRNA(Gln) through the transamidation of misacylated Asp-tRNA(Asn) or Glu-tRNA(Gln) in organisms which lack either or both of asparaginyl-tRNA or glutaminyl-tRNA synthetases. The reaction takes place in the presence of glutamine and ATP through an activated phospho-Asp-tRNA(Asn) or phospho-Glu-tRNA(Gln). The polypeptide is Aspartyl/glutamyl-tRNA(Asn/Gln) amidotransferase subunit B (Anaeromyxobacter dehalogenans (strain 2CP-1 / ATCC BAA-258)).